A 25-amino-acid polypeptide reads, in one-letter code: Caerin 2.1 (25 aa).

As to expression, expressed by the skin dorsal glands.

The protein resides in the secreted. Its function is as follows. Antibacterial peptide with narrow spectrum of activity. Active against the Gram-negative bacterium P.multocida (MIC=25 ug/ml). Inhibits the formation of NO by neuronal nitric oxide synthase with an IC(50) of 9 ug/ml. The sequence is that of Caerin 2.1 from Litoria peronii (Emerald spotted tree frog).